Here is a 23-residue protein sequence, read N- to C-terminus: Aurein-4.2 (23 aa).

Belongs to the frog skin active peptide (FSAP) family. Aurein subfamily. In terms of tissue distribution, expressed by the skin dorsal glands.

The protein resides in the secreted. Functionally, has no antimicrobial or anticancer activity. This Ranoidea aurea (Green and golden bell frog) protein is Aurein-4.2.